The chain runs to 393 residues: Lipid-A-disaccharide synthase (393 aa).

This sequence belongs to the LpxB family.

It carries out the reaction a lipid X + a UDP-2-N,3-O-bis[(3R)-3-hydroxyacyl]-alpha-D-glucosamine = a lipid A disaccharide + UDP + H(+). Its pathway is bacterial outer membrane biogenesis; LPS lipid A biosynthesis. Functionally, condensation of UDP-2,3-diacylglucosamine and 2,3-diacylglucosamine-1-phosphate to form lipid A disaccharide, a precursor of lipid A, a phosphorylated glycolipid that anchors the lipopolysaccharide to the outer membrane of the cell. The protein is Lipid-A-disaccharide synthase of Actinobacillus pleuropneumoniae serotype 3 (strain JL03).